The chain runs to 211 residues: Protoglabretal synthase MOI1 (211 aa).

Helical transmembrane passes span 16-36 (ASLH…TWII), 50-70 (LICW…YYVF), 104-124 (VLGI…LAAY), 135-155 (IFQF…FLTA), and 179-199 (IWVI…HAIC). The EXPERA domain occupies 46–188 (IERLLICWWA…IWVIVPMLIA (143 aa)).

It belongs to the EBP family. In terms of tissue distribution, expressed in maturing fruits and in juice vesicles.

The protein localises to the membrane. It carries out the reaction 7,8-epoxymelianol = protoglabretal. The protein operates within secondary metabolite biosynthesis; terpenoid biosynthesis. Functionally, isomerase involved in the biosynthesis of glabretanes triterpene natural products such as glabretal, a component with in vitro antiproliferative properties on lymphocytes. Catalyzes the conversion of 7,8-epoxymelianol to protoglabretal via skeletal rearrangements. The polypeptide is Protoglabretal synthase MOI1 (Citrus sinensis (Sweet orange)).